The sequence spans 354 residues: Ornithine transcarbamylase, mitochondrial (354 aa).

The transit peptide at 1–32 directs the protein to the mitochondrion; that stretch reads MLFHLRTLLNNAALRNGHNFVVRNFRCGQPLQ. Residue lysine 70 is modified to N6-acetyllysine; alternate. The residue at position 70 (lysine 70) is an N6-succinyllysine; alternate. Residue lysine 80 is modified to N6-succinyllysine. Lysine 88 is modified (N6-acetyllysine; alternate). An N6-succinyllysine; alternate modification is found at lysine 88. The residue at position 133 (serine 133) is a Phosphoserine. N6-acetyllysine; alternate occurs at positions 144, 221, 231, and 238. Residues lysine 144, lysine 221, lysine 231, and lysine 238 each carry the N6-succinyllysine; alternate modification. An N6-acetyllysine modification is found at lysine 243. Residue aspartate 263 is part of the active site. 2 positions are modified to N6-succinyllysine: lysine 274 and lysine 289. Lysine 292 is modified (N6-acetyllysine; alternate). Residue lysine 292 is modified to N6-succinyllysine; alternate. Residue cysteine 303 is part of the active site. Lysine 307 is modified (N6-acetyllysine; alternate). Lysine 307 carries the N6-succinyllysine; alternate modification.

This sequence belongs to the aspartate/ornithine carbamoyltransferase superfamily. OTCase family. As to quaternary structure, homotrimer. Post-translationally, acetylation at Lys-88 negatively regulates ornithine carbamoyltransferase activity in response to nutrient signals.

It localises to the mitochondrion matrix. The catalysed reaction is carbamoyl phosphate + L-ornithine = L-citrulline + phosphate + H(+). Its pathway is nitrogen metabolism; urea cycle; L-citrulline from L-ornithine and carbamoyl phosphate: step 1/1. With respect to regulation, negatively regulated by lysine acetylation. Its function is as follows. Catalyzes the second step of the urea cycle, the condensation of carbamoyl phosphate with L-ornithine to form L-citrulline. The urea cycle ensures the detoxification of ammonia by converting it to urea for excretion. The sequence is that of Ornithine transcarbamylase, mitochondrial from Bos taurus (Bovine).